Consider the following 144-residue polypeptide: Small ribosomal subunit protein eS19B (144 aa).

This sequence belongs to the eukaryotic ribosomal protein eS19 family. In terms of assembly, component of the small ribosomal subunit (SSU). Mature yeast ribosomes consist of a small (40S) and a large (60S) subunit. The 40S small subunit contains 1 molecule of ribosomal RNA (18S rRNA) and 33 different proteins (encoded by 57 genes). The large 60S subunit contains 3 rRNA molecules (25S, 5.8S and 5S rRNA) and 46 different proteins (encoded by 81 genes).

Its subcellular location is the cytoplasm. Its function is as follows. Component of the ribosome, a large ribonucleoprotein complex responsible for the synthesis of proteins in the cell. The small ribosomal subunit (SSU) binds messenger RNAs (mRNAs) and translates the encoded message by selecting cognate aminoacyl-transfer RNA (tRNA) molecules. The large subunit (LSU) contains the ribosomal catalytic site termed the peptidyl transferase center (PTC), which catalyzes the formation of peptide bonds, thereby polymerizing the amino acids delivered by tRNAs into a polypeptide chain. The nascent polypeptides leave the ribosome through a tunnel in the LSU and interact with protein factors that function in enzymatic processing, targeting, and the membrane insertion of nascent chains at the exit of the ribosomal tunnel. eS19 is required for proper maturation of the small (40S) ribosomal subunit. Binds to 40S pre-ribosomal particles, probably required after association of NOC4 but before association of ENP1, TSR1 and RIO2 with 20/21S pre-rRNA. Required for proper maturation of the small (40S) ribosomal subunit. Binds to 40s pre-ribosomal particles, probably required after association of NOC4 but before association of ENP1, TSR1 and RIO2 with 20/21S pre-rRNA. This chain is Small ribosomal subunit protein eS19B, found in Saccharomyces cerevisiae (strain ATCC 204508 / S288c) (Baker's yeast).